The chain runs to 140 residues: RxLR effector protein Avh23 (140 aa).

The signal sequence occupies residues Met-1–Ala-21. The RxLR-dEER motif lies at Arg-54 to Arg-72. The ADA2-binding IR1 repeat unit spans residues Gln-100 to Asp-113. An ADA2-binding IR2 repeat occupies Gln-114–Ala-127.

It belongs to the RxLR effector family. In terms of assembly, interacts with host histone acetyl transferase SAGA complex subunit ADA2.

It is found in the secreted. The protein resides in the host nucleus. Its subcellular location is the host cytoplasm. In terms of biological role, effector that suppresses plant defense responses during the early stages of pathogen infection. Suppresses cell death induced by effectors and PAMPs in plant hosts. Acts as a modulator of histone acetyltransferase (HAT) in plants. Avh23 binds to the ADA2 subunit of the HAT complex SAGA and disrupts its assembly by interfering with the association of ADA2 with the catalytic subunit GCN5. As such, Avh23 suppresses H3K9 acetylation mediated by the ADA2/GCN5 module and increases plant susceptibility. In Phytophthora sojae (Soybean stem and root rot agent), this protein is RxLR effector protein Avh23.